A 344-amino-acid chain; its full sequence is Secreted LysM effector LysM2 (344 aa).

Positions 1–24 are cleaved as a signal peptide; sequence MMAPKSLQTGLLILLLAKLKLAWG. A LysM 1 domain is found at 36–80; sequence YEAAASSGDTCTSFAAEWGLTEETFASLNPSAACPSLVAGQNYCM. Low complexity predominate over residues 88 to 134; it reads STTSSSSSTTSSSTTSSSTTSSSTTSSSTTTSSFTTTTASETTSTAA. Positions 88–141 are disordered; it reads STTSSSSSTTSSSTTSSSTTSSSTTSSSTTTSSFTTTTASETTSTAANGVTTPM. 3 LysM domains span residues 153–199, 216–262, and 296–342; these read KFDL…YVCV and KFWL…YICV.

The protein belongs to the secreted LysM effector family.

Functionally, might have a role in sequestration of chitin oligosaccharides (breakdown products of fungal cell walls that are released during invasion and act as triggers of host immunity) to dampen host defense. In Penicillium expansum (Blue mold rot fungus), this protein is Secreted LysM effector LysM2.